Consider the following 301-residue polypeptide: Porphobilinogen deaminase (301 aa).

Cysteine 235 carries the S-(dipyrrolylmethanemethyl)cysteine modification.

Belongs to the HMBS family. In terms of assembly, monomer. It depends on dipyrromethane as a cofactor.

The catalysed reaction is 4 porphobilinogen + H2O = hydroxymethylbilane + 4 NH4(+). It functions in the pathway porphyrin-containing compound metabolism; protoporphyrin-IX biosynthesis; coproporphyrinogen-III from 5-aminolevulinate: step 2/4. Its function is as follows. Tetrapolymerization of the monopyrrole PBG into the hydroxymethylbilane pre-uroporphyrinogen in several discrete steps. This is Porphobilinogen deaminase from Thermus thermophilus (strain ATCC BAA-163 / DSM 7039 / HB27).